The primary structure comprises 234 residues: Sugar fermentation stimulation protein homolog (234 aa).

This sequence belongs to the SfsA family.

The protein is Sugar fermentation stimulation protein homolog of Enterobacter sp. (strain 638).